Here is a 348-residue protein sequence, read N- to C-terminus: ECA polysaccharide chain length modulation protein (348 aa).

Topologically, residues 1 to 30 (MTQPMPGKPAEDAENELDIRGLFRTLWAGK) are cytoplasmic. Residues 31 to 51 (LWIIGMGLAFALIALAYTFFA) form a helical membrane-spanning segment. Topologically, residues 52-322 (RQEWSSTAIT…EPVKRDSPRR (271 aa)) are periplasmic. The helical transmembrane segment at 323-343 (AFLMIMWGIVGGLIGAGVALT) threads the bilayer. Over 344–348 (RRCSK) the chain is Cytoplasmic.

Belongs to the WzzB/Cld/Rol family. As to quaternary structure, homooctamer. Probably part of a complex composed of WzxE, WzyE and WzzE.

The protein localises to the cell inner membrane. It participates in bacterial outer membrane biogenesis; enterobacterial common antigen biosynthesis. In terms of biological role, modulates the polysaccharide chain length of enterobacterial common antigen (ECA). The polypeptide is ECA polysaccharide chain length modulation protein (Escherichia coli O157:H7).